A 427-amino-acid polypeptide reads, in one-letter code: UDP-N-acetyl-D-mannosamine dehydrogenase (427 aa).

NAD(+) contacts are provided by Y19, I20, D39, R44, T91, and T130. UDP-N-acetyl-alpha-D-mannosaminouronate contacts are provided by R155, V156, K207, N211, R214, H245, R247, and G258. The active-site Proton donor/acceptor is the K207. C261 serves as the catalytic Nucleophile. Residues Y318 and K319 each contribute to the UDP-N-acetyl-alpha-D-mannosaminouronate site. R326 is an NAD(+) binding site. A UDP-N-acetyl-alpha-D-mannosaminouronate-binding site is contributed by K404.

Belongs to the UDP-glucose/GDP-mannose dehydrogenase family. Homotetramer; probably dimer of dimers.

The catalysed reaction is UDP-N-acetyl-alpha-D-mannosamine + 2 NAD(+) + H2O = UDP-N-acetyl-alpha-D-mannosaminouronate + 2 NADH + 3 H(+). Functionally, catalyzes the four-electron oxidation of UDP-N-acetyl-D-mannosamine (UDP-ManNAc), reducing NAD(+) and releasing UDP-N-acetylmannosaminuronic acid (UDP-ManNAcA). This Methanococcus vannielii (strain ATCC 35089 / DSM 1224 / JCM 13029 / OCM 148 / SB) protein is UDP-N-acetyl-D-mannosamine dehydrogenase (wecC).